A 273-amino-acid polypeptide reads, in one-letter code: Shikimate dehydrogenase (NADP(+)) (273 aa).

Shikimate-binding positions include 14–16 (SKS) and threonine 61. The Proton acceptor role is filled by lysine 65. Residues asparagine 86 and aspartate 102 each contribute to the shikimate site. NADP(+)-binding positions include 126 to 130 (GAGGA), 150 to 155 (NRTHAR), and methionine 213. Tyrosine 215 is a shikimate binding site. Glycine 237 is a binding site for NADP(+).

This sequence belongs to the shikimate dehydrogenase family. Homodimer.

It catalyses the reaction shikimate + NADP(+) = 3-dehydroshikimate + NADPH + H(+). It participates in metabolic intermediate biosynthesis; chorismate biosynthesis; chorismate from D-erythrose 4-phosphate and phosphoenolpyruvate: step 4/7. Functionally, involved in the biosynthesis of the chorismate, which leads to the biosynthesis of aromatic amino acids. Catalyzes the reversible NADPH linked reduction of 3-dehydroshikimate (DHSA) to yield shikimate (SA). This is Shikimate dehydrogenase (NADP(+)) from Aeromonas hydrophila subsp. hydrophila (strain ATCC 7966 / DSM 30187 / BCRC 13018 / CCUG 14551 / JCM 1027 / KCTC 2358 / NCIMB 9240 / NCTC 8049).